The sequence spans 498 residues: Glutamyl-tRNA(Gln) amidotransferase subunit A (498 aa).

Catalysis depends on charge relay system residues Lys80 and Ser155. The interval 132 to 159 (SSTENSAYGPTRNPWDTDRVPGGSSGGS) is disordered. Ser179 functions as the Acyl-ester intermediate in the catalytic mechanism.

The protein belongs to the amidase family. GatA subfamily. In terms of assembly, heterotrimer of A, B and C subunits.

It catalyses the reaction L-glutamyl-tRNA(Gln) + L-glutamine + ATP + H2O = L-glutaminyl-tRNA(Gln) + L-glutamate + ADP + phosphate + H(+). Functionally, allows the formation of correctly charged Gln-tRNA(Gln) through the transamidation of misacylated Glu-tRNA(Gln) in organisms which lack glutaminyl-tRNA synthetase. The reaction takes place in the presence of glutamine and ATP through an activated gamma-phospho-Glu-tRNA(Gln). The chain is Glutamyl-tRNA(Gln) amidotransferase subunit A from Thermobifida fusca (strain YX).